The sequence spans 278 residues: Complement component 1 Q subcomponent-binding protein, mitochondrial (278 aa).

The N-terminal 70 residues, 1 to 70, are a transit peptide targeting the mitochondrion; that stretch reads MFQLLRCVPR…PCACGCGCSG (70 aa). The tract at residues 73–90 is C1q binding; that stretch reads TEGDKAFVDFLSDEIKEE. S84 bears the Phosphoserine mark. An N6-acetyllysine mark is found at K88 and K91. Residues 136 to 164 form a disordered region; the sequence is IPPAFGGEEEEPSQGQKAEEQEPELTSTP. The interval 166 to 209 is interaction with MAVS; that stretch reads FVVEVTKDGSSKALVLDCHYPEDEIGQEDDQSDIFSIKEVSFQA. Y185 is subject to Phosphotyrosine. 2 positions are modified to phosphoserine: S197 and S201. T210 carries the post-translational modification Phosphothreonine.

The protein belongs to the MAM33 family. As to quaternary structure, homotrimer; three monomers form a donut-shaped structure with an unusually asymmetric charge distribution on the surface. Interacts with CDK13, HRK, VTN, NFYB, ADRA1B, FOXC1, DDX21, DDX50, NCL, SRSF1 and SRSF9. Interacts with CD93; the association may represent a cell surface C1q receptor. Interacts with KRT1; the association represents a cell surface kininogen receptor. Interacts with CD209; the interaction is indicative for a C1q:C1QBP:CD209 signaling complex. Interacts with FBL and RRP1; the respective interactions with C1QBP are competitive. Probably associates with the mitoribosome. Interacts with MAVS; the interaction occurs upon viral transfection. Interacts with PPIF. Interacts with U2AF1L4. Interacts with PLEKHN1. Interacts with VGF-derived peptide TLQP-21. Interacts with MRE11 and RAD50; forming the MRC (MRE11-RAD50-C1QBP) complex that inhibits the activity of MRE11.

It is found in the mitochondrion matrix. The protein localises to the nucleus. The protein resides in the cell membrane. It localises to the secreted. Its subcellular location is the cytoplasm. It is found in the nucleolus. Its function is as follows. Multifunctional and multicompartmental protein involved in inflammation and infection processes, ribosome biogenesis, protein synthesis in mitochondria, regulation of apoptosis, transcriptional regulation and pre-mRNA splicing. At the cell surface is thought to act as an endothelial receptor for plasma proteins of the complement and kallikrein-kinin cascades. Putative receptor for C1q; specifically binds to the globular 'heads' of C1q thus inhibiting C1; may perform the receptor function through a complex with C1qR/CD93. In complex with cytokeratin-1/KRT1 is a high affinity receptor for kininogen-1/HMWK. Can also bind other plasma proteins, such as coagulation factor XII leading to its autoactivation. May function to bind initially fluid kininogen-1 to the cell membrane. The secreted form may enhance both extrinsic and intrinsic coagulation pathways. It is postulated that the cell surface form requires docking with transmembrane proteins for downstream signaling which might be specific for a cell-type or response. By acting as C1q receptor is involved in chemotaxis of immature dendritic cells and neutrophils and is proposed to signal through CD209/DC-SIGN on immature dendritic cells, through integrin alpha-4/beta-1 during trophoblast invasion of the decidua, and through integrin beta-1 during endothelial cell adhesion and spreading. Signaling involved in inhibition of innate immune response is implicating the PI3K-AKT/PKB pathway. Required for protein synthesis in mitochondria. In mitochondrial translation may be involved in formation of functional 55S mitoribosomes; the function seems to involve its RNA-binding activity. Acts as a RNA modification reader, which specifically recognizes and binds mitochondrial RNAs modified by C5-methylcytosine (m5C) in response to stress, and promotes recruitment of the mitochondrial degradosome complex, leading to their degradation. May be involved in the nucleolar ribosome maturation process; the function may involve the exchange of FBL for RRP1 in the association with pre-ribosome particles. Involved in regulation of RNA splicing by inhibiting the RNA-binding capacity of SRSF1 and its phosphorylation. Is required for the nuclear translocation of splicing factor U2AF1L4. Involved in regulation of CDKN2A- and HRK-mediated apoptosis. Stabilizes mitochondrial CDKN2A isoform smARF. May be involved in regulation of FOXC1 transcriptional activity and NFY/CCAAT-binding factor complex-mediated transcription. May play a role in antibacterial defense as it can bind to cell surface hyaluronan and inhibit Streptococcus pneumoniae hyaluronate lyase. May be involved in modulation of the immune response; ligation by HCV core protein is resulting in suppression of interleukin-12 production in monocyte-derived dendritic cells. Involved in regulation of antiviral response by inhibiting RIGI- and IFIH1-mediated signaling pathways probably involving its association with MAVS after viral infection. Acts as a regulator of DNA repair via homologous recombination by inhibiting the activity of MRE11: interacts with unphosphorylated MRE11 and RAD50 in absence of DNA damage, preventing formation and activity of the MRN complex. Following DNA damage, dissociates from phosphorylated MRE11, allowing formation of the MRN complex. The protein is Complement component 1 Q subcomponent-binding protein, mitochondrial (C1QBP) of Bos taurus (Bovine).